The chain runs to 217 residues: Cytidylate kinase (217 aa).

An ATP-binding site is contributed by Gly9–Ser17.

The protein belongs to the cytidylate kinase family. Type 1 subfamily.

The protein resides in the cytoplasm. The catalysed reaction is CMP + ATP = CDP + ADP. The enzyme catalyses dCMP + ATP = dCDP + ADP. In Bdellovibrio bacteriovorus (strain ATCC 15356 / DSM 50701 / NCIMB 9529 / HD100), this protein is Cytidylate kinase.